Reading from the N-terminus, the 206-residue chain is Thymidylate kinase (206 aa).

Residue 11 to 18 (GIDGAGKT) participates in ATP binding.

This sequence belongs to the thymidylate kinase family.

The catalysed reaction is dTMP + ATP = dTDP + ADP. In terms of biological role, phosphorylation of dTMP to form dTDP in both de novo and salvage pathways of dTTP synthesis. This is Thymidylate kinase from Burkholderia thailandensis (strain ATCC 700388 / DSM 13276 / CCUG 48851 / CIP 106301 / E264).